The sequence spans 493 residues: 3-octaprenyl-4-hydroxybenzoate carboxy-lyase (493 aa).

Asn-172 contributes to the Mn(2+) binding site. Prenylated FMN is bound by residues 175 to 177, 189 to 191, and 194 to 195; these read IYR, RWL, and RG. Position 238 (Glu-238) interacts with Mn(2+). The active-site Proton donor is the Asp-287.

Belongs to the UbiD family. Homohexamer. Requires prenylated FMN as cofactor. The cofactor is Mn(2+).

The protein resides in the cell membrane. The enzyme catalyses a 4-hydroxy-3-(all-trans-polyprenyl)benzoate + H(+) = a 2-(all-trans-polyprenyl)phenol + CO2. The protein operates within cofactor biosynthesis; ubiquinone biosynthesis. Catalyzes the decarboxylation of 3-octaprenyl-4-hydroxy benzoate to 2-octaprenylphenol, an intermediate step in ubiquinone biosynthesis. The chain is 3-octaprenyl-4-hydroxybenzoate carboxy-lyase from Shewanella halifaxensis (strain HAW-EB4).